A 272-amino-acid polypeptide reads, in one-letter code: Tryptophan synthase alpha chain (272 aa).

Catalysis depends on proton acceptor residues Glu60 and Asp71.

This sequence belongs to the TrpA family. In terms of assembly, tetramer of two alpha and two beta chains.

The enzyme catalyses (1S,2R)-1-C-(indol-3-yl)glycerol 3-phosphate + L-serine = D-glyceraldehyde 3-phosphate + L-tryptophan + H2O. Its pathway is amino-acid biosynthesis; L-tryptophan biosynthesis; L-tryptophan from chorismate: step 5/5. Functionally, the alpha subunit is responsible for the aldol cleavage of indoleglycerol phosphate to indole and glyceraldehyde 3-phosphate. This Methanosarcina acetivorans (strain ATCC 35395 / DSM 2834 / JCM 12185 / C2A) protein is Tryptophan synthase alpha chain.